Consider the following 260-residue polypeptide: Ribosomal RNA small subunit methyltransferase G (260 aa).

S-adenosyl-L-methionine is bound by residues glycine 111, phenylalanine 116, and arginine 181.

Belongs to the methyltransferase superfamily. RNA methyltransferase RsmG family.

It localises to the cytoplasm. It catalyses the reaction guanosine(527) in 16S rRNA + S-adenosyl-L-methionine = N(7)-methylguanosine(527) in 16S rRNA + S-adenosyl-L-homocysteine. In terms of biological role, specifically methylates the N7 position of guanine in position 527 of 16S rRNA. The protein is Ribosomal RNA small subunit methyltransferase G of Nitrobacter hamburgensis (strain DSM 10229 / NCIMB 13809 / X14).